The following is a 204-amino-acid chain: FMN-dependent NADH:quinone oxidoreductase (204 aa).

Residues serine 10 and 15 to 17 (SLS) contribute to the FMN site.

It belongs to the azoreductase type 1 family. Homodimer. The cofactor is FMN.

The catalysed reaction is 2 a quinone + NADH + H(+) = 2 a 1,4-benzosemiquinone + NAD(+). It carries out the reaction N,N-dimethyl-1,4-phenylenediamine + anthranilate + 2 NAD(+) = 2-(4-dimethylaminophenyl)diazenylbenzoate + 2 NADH + 2 H(+). Functionally, quinone reductase that provides resistance to thiol-specific stress caused by electrophilic quinones. In terms of biological role, also exhibits azoreductase activity. Catalyzes the reductive cleavage of the azo bond in aromatic azo compounds to the corresponding amines. The sequence is that of FMN-dependent NADH:quinone oxidoreductase from Rhizobium johnstonii (strain DSM 114642 / LMG 32736 / 3841) (Rhizobium leguminosarum bv. viciae).